A 529-amino-acid chain; its full sequence is Zinc finger protein 572 (529 aa).

Residues 1 to 62 (MEQEKKLLVS…EWSKRHRPQH (62 aa)) form a disordered region. Glycyl lysine isopeptide (Lys-Gly) (interchain with G-Cter in SUMO2) cross-links involve residues Lys5 and Lys6. The span at 26 to 35 (TGDTSMNNLE) shows a compositional bias: polar residues. The segment covering 36 to 55 (TVHHNNSKADKLKEKPSEWS) has biased composition (basic and acidic residues). C2H2-type zinc fingers lie at residues 132 to 154 (YKCSECWKSFSNSSHLRTHQRTH), 160 to 182 (YKCSECAKCFCNSSHLIQHLRMH), 188 to 210 (YQCGECGKSFSNTSHLIIHERTH), 216 to 238 (YKCPECGKRFSSSSHLIQHHRSH), 244 to 266 (YECSVCGKGFSHSYVLIEHQRTH), 272 to 294 (YKCPDCGKSFSQSSSLIRHQRTH), 300 to 322 (YKCLECEKSFGCNSTLIKHQRIH), 328 to 350 (YQCPECGKNFSRSSNLITHQKMH), 384 to 406 (YRCCECGKSFGLSSHLIRHQRTH), 412 to 434 (YRCSECWKTFSQSSTLVIHQRTH), 440 to 462 (YKCPDCGESFSQSFNLIRHRRTH), and 468 to 490 (YKCTSCEKCFSRSAYLSQHRKIH).

The protein belongs to the krueppel C2H2-type zinc-finger protein family.

The protein resides in the nucleus. In terms of biological role, may be involved in transcriptional regulation. This chain is Zinc finger protein 572 (ZNF572), found in Homo sapiens (Human).